The sequence spans 359 residues: TGACG-sequence-specific DNA-binding protein TGA-1A (359 aa).

Residues 44 to 54 (KRLDNETEDTS) are compositionally biased toward basic and acidic residues. The interval 44-72 (KRLDNETEDTSHGTVGTSNRYEPETSKPV) is disordered. A bZIP domain is found at 72 to 135 (VEKVLRRLAQ…GGVDASQLSY (64 aa)). Residues 73–125 (EKVLRRLAQNREAARKSRLRKKAYVQQLENSKLKLIQLEQELERARKQGMCVG) are a coiled coil. A basic motif region spans residues 74–94 (KVLRRLAQNREAARKSRLRKK). The segment at 100 to 114 (LENSKLKLIQLEQEL) is leucine-zipper. Positions 143-354 (TAVFDMEYGH…RVLSSQWATR (212 aa)) constitute a DOG1 domain.

Belongs to the bZIP family. Binds DNA as a dimer.

It is found in the nucleus. Functionally, transcriptional activator that binds specifically to the DNA sequence 5'-TGACG-3'. Recognizes ocs elements like the as-1 motif of the cauliflower mosaic virus 35S promoter. Binding to the as-1-like cis elements mediate auxin- and salicylic acid-inducible transcription. Could also bind to the Hex-motif (5'-TGACGTGG-3') another cis-acting element found in plant histone promoters. The chain is TGACG-sequence-specific DNA-binding protein TGA-1A (TGA1A) from Nicotiana tabacum (Common tobacco).